The chain runs to 190 residues: MAILPEFISQTPPVTRYIVLGTLFTTLAVNFGYVSDLKIFFNWKLFLAKGEYWRAITTFLYVGPFGLELILYLSFLLRFMSMLERSSPPPQTQSFLKTVLIVWFSLLVTSYFSYMPFAASYFSFTMLYIWSWKHPLYRISILGLFDVKAPYVPWVMVLLRWLRTGIFPLLDLISALIGHVYFFVTDFSTV.

The Cytoplasmic portion of the chain corresponds to 1–16; the sequence is MAILPEFISQTPPVTR. The helical transmembrane segment at 17–37 threads the bilayer; it reads YIVLGTLFTTLAVNFGYVSDL. Residues 38–55 lie on the Lumenal side of the membrane; sequence KIFFNWKLFLAKGEYWRA. A helical membrane pass occupies residues 56 to 76; it reads ITTFLYVGPFGLELILYLSFL. At 77 to 98 the chain is on the cytoplasmic side; it reads LRFMSMLERSSPPPQTQSFLKT. Residues 99–119 form a helical membrane-spanning segment; the sequence is VLIVWFSLLVTSYFSYMPFAA. Residues 120-138 lie on the Lumenal side of the membrane; sequence SYFSFTMLYIWSWKHPLYR. A helical membrane pass occupies residues 139-159; the sequence is ISILGLFDVKAPYVPWVMVLL. Residues 160-163 lie on the Cytoplasmic side of the membrane; that stretch reads RWLR. The helical transmembrane segment at 164-184 threads the bilayer; it reads TGIFPLLDLISALIGHVYFFV. The Lumenal segment spans residues 185–190; the sequence is TDFSTV.

This sequence belongs to the derlin family.

The protein localises to the endoplasmic reticulum membrane. This is an uncharacterized protein from Schizosaccharomyces pombe (strain 972 / ATCC 24843) (Fission yeast).